The primary structure comprises 414 residues: Enolase (414 aa).

Residue Gln-162 participates in (2R)-2-phosphoglycerate binding. The active-site Proton donor is Glu-204. Mg(2+) is bound by residues Asp-239, Glu-280, and Asp-307. (2R)-2-phosphoglycerate contacts are provided by Lys-332, Arg-361, Ser-362, and Lys-383. Lys-332 serves as the catalytic Proton acceptor.

Belongs to the enolase family. Requires Mg(2+) as cofactor.

The protein resides in the cytoplasm. It localises to the secreted. Its subcellular location is the cell surface. It carries out the reaction (2R)-2-phosphoglycerate = phosphoenolpyruvate + H2O. It functions in the pathway carbohydrate degradation; glycolysis; pyruvate from D-glyceraldehyde 3-phosphate: step 4/5. Functionally, catalyzes the reversible conversion of 2-phosphoglycerate (2-PG) into phosphoenolpyruvate (PEP). It is essential for the degradation of carbohydrates via glycolysis. The chain is Enolase from Campylobacter jejuni subsp. doylei (strain ATCC BAA-1458 / RM4099 / 269.97).